The chain runs to 571 residues: Urease subunit alpha (571 aa).

One can recognise a Urease domain in the interval 133–571; that stretch reads GGIDTHVHFV…LPLTQRYFLF (439 aa). Ni(2+) contacts are provided by His138, His140, and Lys221. Lys221 is subject to N6-carboxylysine. His223 lines the substrate pocket. Positions 250 and 276 each coordinate Ni(2+). His324 (proton donor) is an active-site residue. Asp364 contacts Ni(2+).

Belongs to the metallo-dependent hydrolases superfamily. Urease alpha subunit family. In terms of assembly, heterotrimer of UreA (gamma), UreB (beta) and UreC (alpha) subunits. Three heterotrimers associate to form the active enzyme. It depends on Ni cation as a cofactor. In terms of processing, carboxylation allows a single lysine to coordinate two nickel ions.

The protein resides in the cytoplasm. It carries out the reaction urea + 2 H2O + H(+) = hydrogencarbonate + 2 NH4(+). Its pathway is nitrogen metabolism; urea degradation; CO(2) and NH(3) from urea (urease route): step 1/1. This Staphylococcus xylosus protein is Urease subunit alpha.